We begin with the raw amino-acid sequence, 190 residues long: Dynein axonemal light chain 1 (190 aa).

Ala2 is subject to N-acetylalanine. LRR repeat units lie at residues 49 to 70 (NCEKLSLSTNCIEKIANLNGLK), 71 to 92 (NLRILSLGRNNIKNLNGLEAVG), 94 to 115 (TLEELWISYNFIEKLKGIHVMK), and 116 to 137 (KLKILYMSNNLVKDWAEFLKLA). A Phosphoserine modification is found at Ser56. An LRRCT domain is found at 150–190 (NPLEEKHSAEGNWIDEATKRVPKLKKLDGTPVIKEDEEEES).

The protein belongs to the dynein light chain LC1-type family. In terms of assembly, interacts with ZMYND10 (via C-terminus). Interacts with DNAH5, a outer arm dynein heavy chain. Interacts with tubulin located within the A-tubule of the outer doublets in a ATP-independent manner. In terms of tissue distribution, expressed in the respiratory epithelium of the upper airways and the ependymal cells lining the brain ventricles.

The protein localises to the cytoplasm. It localises to the cytoskeleton. It is found in the cilium axoneme. Functionally, part of the multisubunit axonemal ATPase complexes that generate the force for cilia motility and govern beat frequency. Component of the outer arm dynein (ODA). May be involved in a mechanosensory feedback mechanism controlling ODA activity based on external conformational cues by tethering the outer arm dynein heavy chain (DNAH5) to the microtubule within the axoneme. Important for ciliary function in the airways and for the function of the cilia that produce the nodal flow essential for the determination of the left-right asymmetry. The polypeptide is Dynein axonemal light chain 1 (Dnal1) (Mus musculus (Mouse)).